We begin with the raw amino-acid sequence, 159 residues long: Cytochrome c-type biogenesis protein CcmE (159 aa).

Over 1-7 (MTPRQRR) the chain is Cytoplasmic. Residues 8–28 (LGMLLAALACAGIALALVLNA) form a helical; Signal-anchor for type II membrane protein membrane-spanning segment. At 29 to 159 (FRSNLVFFFS…LAEGERETQR (131 aa)) the chain is on the periplasmic side. Positions 123 and 127 each coordinate heme.

The protein belongs to the CcmE/CycJ family.

The protein localises to the cell inner membrane. In terms of biological role, heme chaperone required for the biogenesis of c-type cytochromes. Transiently binds heme delivered by CcmC and transfers the heme to apo-cytochromes in a process facilitated by CcmF and CcmH. The polypeptide is Cytochrome c-type biogenesis protein CcmE (Cupriavidus pinatubonensis (strain JMP 134 / LMG 1197) (Cupriavidus necator (strain JMP 134))).